The sequence spans 346 residues: N-acetyl-gamma-glutamyl-phosphate reductase (346 aa).

C154 is an active-site residue.

It belongs to the NAGSA dehydrogenase family. Type 1 subfamily.

It is found in the cytoplasm. It catalyses the reaction N-acetyl-L-glutamate 5-semialdehyde + phosphate + NADP(+) = N-acetyl-L-glutamyl 5-phosphate + NADPH + H(+). It participates in amino-acid biosynthesis; L-arginine biosynthesis; N(2)-acetyl-L-ornithine from L-glutamate: step 3/4. Its function is as follows. Catalyzes the NADPH-dependent reduction of N-acetyl-5-glutamyl phosphate to yield N-acetyl-L-glutamate 5-semialdehyde. This Rhodopirellula baltica (strain DSM 10527 / NCIMB 13988 / SH1) protein is N-acetyl-gamma-glutamyl-phosphate reductase.